Reading from the N-terminus, the 128-residue chain is Conopressin-conophysin (128 aa).

The N-terminal stretch at 1–27 is a signal peptide; sequence MTRSAMQMGRLTLVLCLLLLLLLTTQA. A disulfide bridge connects residues C28 and C33. Glycine amide is present on G36. Positions 37 to 44 are excised as a propeptide; the sequence is GKRDVDER. Disulfide bonds link C50/C90, C53/C64, C58/C80, C65/C70, C97/C115, C109/C127, and C116/C121.

This sequence belongs to the vasopressin/oxytocin family. In terms of tissue distribution, expressed by the venom gland.

It is found in the secreted. In terms of biological role, targets vasopressin-oxytocin related receptors. Is more active on fish receptors than on their human counterparts, supporting an evolved role of this conopressin in the envenomation process. Acts as an agonist on zebrafish vasopressin receptors V1a1R (EC(50)=10.6 nM), V1a2R (EC(50)=44.06 nM, partial agonist), V2R (EC(50)=299.2 nM) and oxytocin receptor (EC(50)=353.73 nM, partial agonist). Shows a weaker activity on human receptors AVPR1B (EC(50)=51.92 nM), AVPR1A (EC(50)=123.78 nM), AVPR2 (EC(50)=299.2 nM) and oxytocin (OXTR) receptor (EC(50)=455.66 nM, partial agonist). In vivo, exhibits grooming and scratching behavior in mice, following intracerebral injection. The chain is Conopressin-conophysin from Conus geographus (Geography cone).